The chain runs to 490 residues: Dual specificity protein kinase CLK3 (490 aa).

The tract at residues 1–138 (MHHCKRYRSP…SKRSSRSVED (138 aa)) is disordered. Phosphotyrosine is present on tyrosine 7. 6 positions are modified to phosphoserine: serine 9, serine 49, serine 51, serine 67, serine 76, and serine 78. Basic and acidic residues-rich tracts occupy residues 26–56 (YSREHEGRLRYPSRREPPPRRSRSRSHDRLP) and 63–76 (ERRDSDTYRCEERS). Basic residues predominate over residues 88–116 (RSRHRRRSRERGPYRTRKHAHHCHKRRTR). Residues 117-130 (SCSSASSRSQQSSK) show a composition bias toward low complexity. At serine 135 the chain carries Phosphoserine. In terms of domain architecture, Protein kinase spans 156 to 472 (YEIVGNLGEG…LAEALLHPFF (317 aa)). ATP contacts are provided by residues 162–170 (LGEGTFGKV) and lysine 186. Aspartate 283 acts as the Proton acceptor in catalysis.

Belongs to the protein kinase superfamily. CMGC Ser/Thr protein kinase family. Lammer subfamily. Post-translationally, autophosphorylates on all three types of residues. Endothelial cells.

Its subcellular location is the nucleus. The protein localises to the cytoplasm. It is found in the cytoplasmic vesicle. It localises to the secretory vesicle. The protein resides in the acrosome. Its subcellular location is the nucleus speckle. It catalyses the reaction L-seryl-[protein] + ATP = O-phospho-L-seryl-[protein] + ADP + H(+). The catalysed reaction is L-threonyl-[protein] + ATP = O-phospho-L-threonyl-[protein] + ADP + H(+). The enzyme catalyses L-tyrosyl-[protein] + ATP = O-phospho-L-tyrosyl-[protein] + ADP + H(+). Its activity is regulated as follows. Leucettine L41 inhibits its kinase activity and affects the regulation of alternative splicing mediated by phosphorylation of SR proteins. Functionally, dual specificity kinase acting on both serine/threonine and tyrosine-containing substrates. Phosphorylates serine- and arginine-rich (SR) proteins of the spliceosomal complex. May be a constituent of a network of regulatory mechanisms that enable SR proteins to control RNA splicing and can cause redistribution of SR proteins from speckles to a diffuse nucleoplasmic distribution. Phosphorylates SRSF1 and SRSF3. Regulates the alternative splicing of tissue factor (F3) pre-mRNA in endothelial cells. The sequence is that of Dual specificity protein kinase CLK3 from Homo sapiens (Human).